We begin with the raw amino-acid sequence, 345 residues long: MRVTDFSFDLPDELIARYPMAQRNASRLLTLDGNTGTLVDKQFTDLLGMINPGDLMVFNNTRVIPARLFGQKASGGKLEILVERMLDDKRILAHVRSSKSPKVDSIIHLDGGYEMKMMARHDALFELQLLSELSILEVLEAVGHMPLPPYIDRPDEDADKERYQTVYNQNPGAVAAPTAGLHFDDAMLEALKAKGVNIAFVTLHVGAGTFQPVRVDNVLEHKMHSEWANVPQDVVDLIARTKAAGNRVVAVGTTSVRSLESAARASAGQLNAFSGDTDIFIYPGYQFQVVDAMVTNFHLPESTLIMLVSAFAGYEHVMAAYQHAIKQKYRFFSYGDAMFVTKKAH.

Belongs to the QueA family. Monomer.

The protein localises to the cytoplasm. It catalyses the reaction 7-aminomethyl-7-carbaguanosine(34) in tRNA + S-adenosyl-L-methionine = epoxyqueuosine(34) in tRNA + adenine + L-methionine + 2 H(+). Its pathway is tRNA modification; tRNA-queuosine biosynthesis. Functionally, transfers and isomerizes the ribose moiety from AdoMet to the 7-aminomethyl group of 7-deazaguanine (preQ1-tRNA) to give epoxyqueuosine (oQ-tRNA). The protein is S-adenosylmethionine:tRNA ribosyltransferase-isomerase of Shewanella oneidensis (strain ATCC 700550 / JCM 31522 / CIP 106686 / LMG 19005 / NCIMB 14063 / MR-1).